The chain runs to 90 residues: Probable Fe(2+)-trafficking protein (90 aa).

The protein belongs to the Fe(2+)-trafficking protein family.

Could be a mediator in iron transactions between iron acquisition and iron-requiring processes, such as synthesis and/or repair of Fe-S clusters in biosynthetic enzymes. This Actinobacillus succinogenes (strain ATCC 55618 / DSM 22257 / CCUG 43843 / 130Z) protein is Probable Fe(2+)-trafficking protein.